Reading from the N-terminus, the 31-residue chain is Cytochrome b6-f complex subunit 6 (31 aa).

The chain crosses the membrane as a helical span at residues Val4–Val24.

This sequence belongs to the PetL family. As to quaternary structure, the 4 large subunits of the cytochrome b6-f complex are cytochrome b6, subunit IV (17 kDa polypeptide, PetD), cytochrome f and the Rieske protein, while the 4 small subunits are PetG, PetL, PetM and PetN. The complex functions as a dimer.

The protein localises to the plastid. The protein resides in the chloroplast thylakoid membrane. Its function is as follows. Component of the cytochrome b6-f complex, which mediates electron transfer between photosystem II (PSII) and photosystem I (PSI), cyclic electron flow around PSI, and state transitions. PetL is important for photoautotrophic growth as well as for electron transfer efficiency and stability of the cytochrome b6-f complex. The sequence is that of Cytochrome b6-f complex subunit 6 from Chara vulgaris (Common stonewort).